Here is a 401-residue protein sequence, read N- to C-terminus: N-acetyllactosaminide beta-1,6-N-acetylglucosaminyl-transferase (401 aa).

At 1-7 (MPPSVRY) the chain is on the cytoplasmic side. The helical; Signal-anchor for type II membrane protein transmembrane segment at 8–28 (FFIVSVTTVIVFIVLYVLSFG) threads the bilayer. Residues 29 to 401 (GDQSYQKLNI…EIAIQPSWYF (373 aa)) are Lumenal-facing. N37, N255, N315, and N389 each carry an N-linked (GlcNAc...) asparagine glycan.

The protein belongs to the glycosyltransferase 14 family.

The protein localises to the golgi apparatus membrane. The enzyme catalyses a beta-D-Gal-(1-&gt;4)-beta-D-GlcNAc-(1-&gt;3)-beta-D-Gal-(1-&gt;4)-beta-D-GlcNAc derivative + UDP-N-acetyl-alpha-D-glucosamine = a beta-D-Gal-(1-&gt;4)-beta-D-GlcNAc-(1-&gt;3)-[beta-D-GlcNAc-(1-&gt;6)]-beta-D-Gal-(1-&gt;4)-N-acetyl-beta-D-glucosaminyl derivative + UDP + H(+). Its pathway is protein modification; protein glycosylation. Functionally, branching enzyme that converts linear into branched poly-N-acetyllactosaminoglycans. Introduces the blood group I antigen during embryonic development. It is closely associated with the development and maturation of erythroid cells. This is N-acetyllactosaminide beta-1,6-N-acetylglucosaminyl-transferase (Gcnt2) from Mus musculus (Mouse).